Here is an 81-residue protein sequence, read N- to C-terminus: Short neurotoxin D (81 aa).

An N-terminal signal peptide occupies residues 1–21 (MKTLLLTLVVVTIVCLDLGYT). 4 disulfide bridges follow: Cys24–Cys43, Cys38–Cys60, Cys62–Cys73, and Cys74–Cys79.

The protein belongs to the three-finger toxin family. Short-chain subfamily. Type I alpha-neurotoxin sub-subfamily. As to expression, expressed by the venom gland.

The protein resides in the secreted. Binds to muscle nicotinic acetylcholine receptor (nAChR) and inhibit acetylcholine from binding to the receptor, thereby impairing neuromuscular transmission. This Aipysurus laevis (Olive sea snake) protein is Short neurotoxin D.